Reading from the N-terminus, the 267-residue chain is Meiosis-specific protein ISC10 (267 aa).

Residues 1-13 (MDVDERLHQDENQ) show a composition bias toward basic and acidic residues. Residues 1–26 (MDVDERLHQDENQTHPFSQKKSSSFL) form a disordered region. Polar residues predominate over residues 14-25 (THPFSQKKSSSF).

Functionally, indispensable for spore formation. This Saccharomyces cerevisiae (strain ATCC 204508 / S288c) (Baker's yeast) protein is Meiosis-specific protein ISC10 (ISC10).